The chain runs to 697 residues: Beta-galactosidase 17 (697 aa).

Residues 1-35 form the signal peptide; it reads MAMTSWPSTGRQRRHQLASMLLLVLVVVGIYVPVF. The Proton donor role is filled by glutamate 218. Residue glutamate 301 is the Nucleophile of the active site. N-linked (GlcNAc...) asparagine glycans are attached at residues asparagine 333, asparagine 519, asparagine 573, asparagine 583, and asparagine 690.

This sequence belongs to the glycosyl hydrolase 35 family. In terms of tissue distribution, ubiquitous, with higher expression levels in roots and siliques.

The protein localises to the secreted. It localises to the extracellular space. The protein resides in the apoplast. The enzyme catalyses Hydrolysis of terminal non-reducing beta-D-galactose residues in beta-D-galactosides.. The chain is Beta-galactosidase 17 (BGAL17) from Arabidopsis thaliana (Mouse-ear cress).